Here is a 221-residue protein sequence, read N- to C-terminus: Serine/arginine-rich splicing factor 9 (221 aa).

RRM domains follow at residues glycine 14–alanine 89 and phenylalanine 111–glycine 187. Residue lysine 36 forms a Glycyl lysine isopeptide (Lys-Gly) (interchain with G-Cter in SUMO2) linkage. Low complexity predominate over residues glycine 187 to glycine 198. Positions glycine 187 to tyrosine 221 are disordered. An interaction with SAFB1 region spans residues threonine 188–arginine 200. Phosphoserine occurs at positions 189, 193, 195, 204, 208, and 211. Position 214 is a phosphotyrosine (tyrosine 214). Serine 216 is modified (phosphoserine).

It belongs to the splicing factor SR family. In terms of assembly, interacts with KHDRBS3. Interacts with HABP4. Interacts with NOL3/ARC/NOP30. Interacts with NSEP1/YB-1/YB1. Interacts with SAFB/SAFB1. Interacts with SRSF6/SFRS6. Interacts with TRA2B/SFRS10. Interacts with C1QBP. May also interact with DUSP11/PIR1. In terms of processing, extensively phosphorylated on serine residues in the RS domain.

It localises to the nucleus. In terms of biological role, plays a role in constitutive splicing and can modulate the selection of alternative splice sites. Represses the splicing of MAPT/Tau exon 10. This Rattus norvegicus (Rat) protein is Serine/arginine-rich splicing factor 9 (Srsf9).